We begin with the raw amino-acid sequence, 1824 residues long: Treslin (1824 aa).

Disordered stretches follow at residues 542-572 (EFYQSSTAGSSGSLRSKKRGTQCTPVRQKMK), 590-622 (AQKTQGDSGSAGSGKGTEKGGKKSSGDRTKPGL), 907-973 (SPSK…SGES), 1001-1035 (RHSSVFYSSSQPRSRNLDRVVSSSQLSHSEGKGKF), 1098-1117 (AVGCRTPQSPRTPNRTVGDN), 1189-1221 (VPENQVNVPDSPVFAKRHSPRLVTPGKNSSPEE), 1293-1388 (PFCN…DDDK), 1459-1518 (FEGK…QSSP), 1617-1650 (TPTHHPTSSQSPLASPLTPSPQSRGWPTPENLNS), and 1803-1824 (PLCQPRRRRTPSRTYSRKKLLD). Positions 546 to 555 (SSTAGSSGSL) are enriched in low complexity. Residues 562–572 (TQCTPVRQKMK) show a composition bias toward polar residues. Over residues 605-619 (GTEKGGKKSSGDRTK) the composition is skewed to basic and acidic residues. The segment covering 907-921 (SPSKKSKMPRSQSVS) has biased composition (polar residues). The span at 932-952 (SDVDNDDRHTLLTKKVSETPL) shows a compositional bias: basic and acidic residues. Polar residues-rich tracts occupy residues 1005-1014 (VFYSSSQPRS) and 1103-1114 (TPQSPRTPNRTV). The span at 1319–1345 (RSGNTPVKESCSPSSNSQGITGTSPSP) shows a compositional bias: polar residues. Over residues 1347–1370 (KSLSSAVAKSSPSPSFGPSRSGVG) the composition is skewed to low complexity. A compositionally biased stretch (polar residues) spans 1462 to 1472 (KQTTSTGTPLT). A compositionally biased stretch (basic and acidic residues) spans 1480–1490 (TPDRRQREAEA). 2 stretches are compositionally biased toward polar residues: residues 1617–1629 (TPTHHPTSSQSPL) and 1636–1650 (SPQSRGWPTPENLNS). Positions 1807 to 1824 (PRRRRTPSRTYSRKKLLD) are enriched in basic residues.

It belongs to the treslin family. Interacts with topbp1 (via BRCT domains); interaction takes place in a cdk2-dependent manner. Component of the replisome complex.

It localises to the nucleus. In terms of biological role, regulator of DNA replication and S/M and G2/M checkpoints. Regulates the triggering of DNA replication initiation via its interaction with topbp1 by participating in cdk2-mediated loading of cdc45l onto replication origins. Required for the transition from pre-replication complex (pre-RC) to pre-initiation complex (pre-IC). Required to prevent mitotic entry after treatment with ionizing radiation. The sequence is that of Treslin (ticrr) from Danio rerio (Zebrafish).